A 247-amino-acid polypeptide reads, in one-letter code: MLKQRFVLDTTALTDLQTREVMGYTSLCEGMKAILDLIADARLQFGISCYVPYPSVYKEMYEFASRNGCDREVTAKIDTWLVKKAPDRYRVDVTSQIFHEYVSYMRERINRGMGVAEDAIWEAATECLFMENPQNKKKEYREEVEREVIGGIIGKFRNKYRAALRYGILDSAPDIDVLILAKELDAAVVASDYGIEKWAEQLGVRFVPANTFPMMIKEYLKHSPEGEKEKGEADKKKKSHSEEAEFI.

Residues 223–247 (SPEGEKEKGEADKKKKSHSEEAEFI) form a disordered region.

Belongs to the HARP family.

The catalysed reaction is Endonucleolytic cleavage of RNA, removing 5'-extranucleotides from tRNA precursor.. Its function is as follows. RNA-free RNase P that catalyzes the removal of the 5'-leader sequence from pre-tRNA to produce the mature 5'-terminus. The sequence is that of RNA-free ribonuclease P from Methanosarcina acetivorans (strain ATCC 35395 / DSM 2834 / JCM 12185 / C2A).